Consider the following 96-residue polypeptide: Citrate lyase acyl carrier protein (96 aa).

Residue Ser14 is modified to O-(phosphoribosyl dephospho-coenzyme A)serine.

Belongs to the CitD family. Oligomer with a subunit composition of (alpha,beta,gamma)6.

The protein localises to the cytoplasm. Its function is as follows. Covalent carrier of the coenzyme of citrate lyase. This is Citrate lyase acyl carrier protein from Lactococcus lactis subsp. lactis (strain IL1403) (Streptococcus lactis).